The sequence spans 322 residues: Methionyl-tRNA formyltransferase (322 aa).

112 to 115 (SLLP) is a binding site for (6S)-5,6,7,8-tetrahydrofolate.

Belongs to the Fmt family.

The enzyme catalyses L-methionyl-tRNA(fMet) + (6R)-10-formyltetrahydrofolate = N-formyl-L-methionyl-tRNA(fMet) + (6S)-5,6,7,8-tetrahydrofolate + H(+). Functionally, attaches a formyl group to the free amino group of methionyl-tRNA(fMet). The formyl group appears to play a dual role in the initiator identity of N-formylmethionyl-tRNA by promoting its recognition by IF2 and preventing the misappropriation of this tRNA by the elongation apparatus. This chain is Methionyl-tRNA formyltransferase, found in Synechococcus sp. (strain JA-3-3Ab) (Cyanobacteria bacterium Yellowstone A-Prime).